Reading from the N-terminus, the 649-residue chain is FAS-associated factor 1 (649 aa).

The 57-residue stretch at Met1–Gly57 folds into the UBA domain. Residues Asp55–Arg84 form a disordered region. Phosphoserine is present on Ser319. Residues Asn568–Leu645 form the UBX domain. Position 579 is a phosphothreonine (Thr579). Ser581 is subject to Phosphoserine.

As to quaternary structure, interacts with CDT1 and ATPase VCP/p97. Interacts (via UBA domain) with FAS (via death domain). Interacts (via UBA domain) with NLRP12 (via DAPIN/PYRIN domain). Central nervous system.

It localises to the nucleus. Ubiquitin-binding protein. Required for the progression of DNA replication forks by targeting DNA replication licensing factor CDT1 for degradation. Potentiates but cannot initiate FAS-induced apoptosis. The protein is FAS-associated factor 1 (Faf1) of Rattus norvegicus (Rat).